We begin with the raw amino-acid sequence, 275 residues long: Tryptophan synthase alpha chain (275 aa).

Residues Glu-49 and Asp-60 each act as proton acceptor in the active site.

The protein belongs to the TrpA family. In terms of assembly, tetramer of two alpha and two beta chains.

It catalyses the reaction (1S,2R)-1-C-(indol-3-yl)glycerol 3-phosphate + L-serine = D-glyceraldehyde 3-phosphate + L-tryptophan + H2O. It participates in amino-acid biosynthesis; L-tryptophan biosynthesis; L-tryptophan from chorismate: step 5/5. The alpha subunit is responsible for the aldol cleavage of indoleglycerol phosphate to indole and glyceraldehyde 3-phosphate. The sequence is that of Tryptophan synthase alpha chain from Psychrobacter sp. (strain PRwf-1).